The primary structure comprises 606 residues: Serine/threonine-protein kinase A-Raf (606 aa).

Residues 19–91 form the RBD domain; it reads GTVKVYLPNK…DGEELIVEVL (73 aa). Residues 98–144 form a Phorbol-ester/DAG-type zinc finger; it reads MHNFVRKTFFSLAFCDFCLKFLFHGFRCQTCGYKFHQHCSSKVPTVC. The Zn(2+) site is built by histidine 99, cysteine 112, cysteine 115, cysteine 125, cysteine 128, histidine 133, cysteine 136, and cysteine 144. 2 positions are modified to phosphoserine: serine 157 and serine 162. Disordered stretches follow at residues 158–207 and 241–290; these read VQDL…NAPL and TDAA…DKKK. Phosphothreonine is present on threonine 181. Phosphoserine occurs at positions 186, 257, and 269. Positions 254 to 267 are enriched in low complexity; that stretch reads PRGSPSPASVSSGR. The segment covering 274-289 has biased composition (basic and acidic residues); it reads SPSEQRERKSLADDKK. In terms of domain architecture, Protein kinase spans 310–570; sequence VQLLKRIGTG…PQILATIELL (261 aa). Residues 316 to 324 and lysine 336 contribute to the ATP site; that span reads IGTGSFGTV. Threonine 318 carries the phosphothreonine modification. The active-site Proton acceptor is the aspartate 429.

This sequence belongs to the protein kinase superfamily. TKL Ser/Thr protein kinase family. RAF subfamily. Interacts with TH1L/NELFD. Requires Zn(2+) as cofactor. In terms of processing, dephosphorylation by the SHOC2-MRAS-PP1c (SMP) complex consisting of SHOC2, GTP-bound M-Ras/MRAS and the catalytic subunit of protein phosphatase 1 (PPP1CA, PPP1CB or PPP1CC); this relieves inactivation and stimulates kinase activity.

The catalysed reaction is L-seryl-[protein] + ATP = O-phospho-L-seryl-[protein] + ADP + H(+). It carries out the reaction L-threonyl-[protein] + ATP = O-phospho-L-threonyl-[protein] + ADP + H(+). In terms of biological role, involved in the transduction of mitogenic signals from the cell membrane to the nucleus. May also regulate the TOR signaling cascade. Phosphorylates PFKFB2. The polypeptide is Serine/threonine-protein kinase A-Raf (ARAF) (Sus scrofa (Pig)).